Reading from the N-terminus, the 365-residue chain is MGAMAPRTLLLLLAAALGPTQTRAGSHSLRYFVTAVSRPGFGEPRYMEVGYVDNTEFVRFDSDAENPRYEPRARWIEQEGPEYWERETRRAKGNEQSFRVDLRTALRYYNQSAGGSHTLQWMAGCDVESDGRLLRGYWQFAYDGCDYIALNEDLKTWTAADMAAQITRRKWEQAGAAERDRAYLEGECVEWLRRYLKNGNATLLRTDPPKAHVTHHRRPEGDVTLRCWALGFYPADITLTWQLNGEELTQEMELVETRPAGDGTFQKWASVVVPLGKEQKYTCHVEHEGLPEPLTLRWGKEEPPSSTKTNTVIIAVPVVLGAVVILGAVMAFVMKRRRNTGGKGGDYALAPGSQSSDMSLPDCKV.

An N-terminal signal peptide occupies residues 1 to 24; it reads MGAMAPRTLLLLLAAALGPTQTRA. The interval 25–114 is alpha-1; that stretch reads GSHSLRYFVT…ALRYYNQSAG (90 aa). The Extracellular portion of the chain corresponds to 25–311; sequence GSHSLRYFVT…EPPSSTKTNT (287 aa). An N-linked (GlcNAc...) asparagine glycan is attached at asparagine 110. The interval 115–206 is alpha-2; the sequence is GSHTLQWMAG…KNGNATLLRT (92 aa). Cysteines 125 and 188 form a disulfide. Asparagine 200 carries an N-linked (GlcNAc...) asparagine glycan. The interval 207–298 is alpha-3; the sequence is DPPKAHVTHH…GLPEPLTLRW (92 aa). Residues 209 to 297 form the Ig-like C1-type domain; the sequence is PKAHVTHHRR…EGLPEPLTLR (89 aa). An intrachain disulfide couples cysteine 227 to cysteine 283. Residues 299-311 are connecting peptide; it reads GKEEPPSSTKTNT. A helical membrane pass occupies residues 312–334; sequence VIIAVPVVLGAVVILGAVMAFVM. Over 335–365 the chain is Cytoplasmic; sequence KRRRNTGGKGGDYALAPGSQSSDMSLPDCKV. Residues 343–365 form a disordered region; the sequence is KGGDYALAPGSQSSDMSLPDCKV. Serine 356 and serine 359 each carry phosphoserine.

The protein belongs to the MHC class I family. Heterodimer of an alpha chain and a beta chain (beta-2-microglobulin).

The protein resides in the membrane. Involved in the presentation of foreign antigens to the immune system. The chain is H-2 class I histocompatibility antigen, D-D alpha chain (H2-D1) from Mus musculus (Mouse).